Consider the following 294-residue polypeptide: Sperm acrosome membrane-associated protein 1 (294 aa).

Residues 1-29 (MSPRGTGCSAGLLMTVGWLLLAGLQSARG) form the signal peptide. At 30 to 221 (TNVTAAVQDA…LPATDAALIF (192 aa)) the chain is on the extracellular side. Asn31 is a glycosylation site (N-linked (GlcNAc...) asparagine). A disordered region spans residues 42–70 (AHEGEGEEETENNDSETAENYAPPETEDV). Positions 46–58 (EGEEETENNDSET) are enriched in acidic residues. A helical membrane pass occupies residues 222–242 (VLTIGVIICVFIIFLLIFIII). The Cytoplasmic segment spans residues 243–294 (NWAAVKAFWGAKASTPEVQSEQSSVRYKDSTSLDQLPTEMPGEDDALSEWNE). Ser256 is modified (phosphoserine). Positions 258-267 (PEVQSEQSSV) are enriched in polar residues. The tract at residues 258–294 (PEVQSEQSSVRYKDSTSLDQLPTEMPGEDDALSEWNE) is disordered. The residue at position 269 (Tyr269) is a Phosphotyrosine. Residues 283–294 (PGEDDALSEWNE) show a composition bias toward acidic residues. Ser290 carries the phosphoserine modification.

Interacts with CYLC1; the interaction may be relevant for proper acrosome attachment to the nuclear envelope. N-glycosylated. As to expression, testis specific.

Its subcellular location is the cytoplasmic vesicle. It is found in the secretory vesicle. The protein resides in the acrosome inner membrane. Plays a role in acrosome formation and establishment of normal sperm morphology during spermatogenesis. Important for male fertility. The protein is Sperm acrosome membrane-associated protein 1 (SPACA1) of Homo sapiens (Human).